The primary structure comprises 102 residues: Small ribosomal subunit protein uS14 (102 aa).

This sequence belongs to the universal ribosomal protein uS14 family. Part of the 30S ribosomal subunit. Contacts proteins S3 and S10.

Functionally, binds 16S rRNA, required for the assembly of 30S particles and may also be responsible for determining the conformation of the 16S rRNA at the A site. This chain is Small ribosomal subunit protein uS14, found in Wolbachia pipientis wMel.